We begin with the raw amino-acid sequence, 114 residues long: Iron-sulfur cluster insertion protein ErpA (114 aa).

Cysteine 42, cysteine 106, and cysteine 108 together coordinate iron-sulfur cluster.

The protein belongs to the HesB/IscA family. Homodimer. The cofactor is iron-sulfur cluster.

Its function is as follows. Required for insertion of 4Fe-4S clusters for at least IspG. This is Iron-sulfur cluster insertion protein ErpA from Buchnera aphidicola subsp. Acyrthosiphon pisum (strain 5A).